A 471-amino-acid chain; its full sequence is tRNA modification GTPase MnmE (471 aa).

Positions 26, 83, and 136 each coordinate (6S)-5-formyl-5,6,7,8-tetrahydrofolate. The region spanning 232–393 (GLRVVLAGQP…LRRRLLQLAG (162 aa)) is the TrmE-type G domain. Residue asparagine 242 coordinates K(+). GTP is bound by residues 242-247 (NVGKSS), 261-267 (TPIAGTT), 286-289 (DTAG), 354-357 (NKAD), and 374-376 (SAR). Serine 246 is a binding site for Mg(2+). K(+) contacts are provided by threonine 261, isoleucine 263, and threonine 266. Threonine 267 serves as a coordination point for Mg(2+). (6S)-5-formyl-5,6,7,8-tetrahydrofolate is bound at residue lysine 471.

This sequence belongs to the TRAFAC class TrmE-Era-EngA-EngB-Septin-like GTPase superfamily. TrmE GTPase family. Homodimer. Heterotetramer of two MnmE and two MnmG subunits. K(+) serves as cofactor.

Its subcellular location is the cytoplasm. Its function is as follows. Exhibits a very high intrinsic GTPase hydrolysis rate. Involved in the addition of a carboxymethylaminomethyl (cmnm) group at the wobble position (U34) of certain tRNAs, forming tRNA-cmnm(5)s(2)U34. In Methylibium petroleiphilum (strain ATCC BAA-1232 / LMG 22953 / PM1), this protein is tRNA modification GTPase MnmE.